A 158-amino-acid chain; its full sequence is UPF0102 protein GbCGDNIH1_0975 (158 aa).

This sequence belongs to the UPF0102 family.

The chain is UPF0102 protein GbCGDNIH1_0975 from Granulibacter bethesdensis (strain ATCC BAA-1260 / CGDNIH1).